The sequence spans 463 residues: Glycine--tRNA ligase (463 aa).

2 residues coordinate substrate: arginine 98 and glutamate 174. ATP-binding positions include arginine 206–glutamate 208, phenylalanine 216–phenylalanine 221, glutamate 290–leucine 291, and glycine 334–arginine 337. Substrate is bound at residue phenylalanine 221–glutamate 225. Glutamate 330–glycine 334 provides a ligand contact to substrate.

Belongs to the class-II aminoacyl-tRNA synthetase family. Homodimer.

It localises to the cytoplasm. The enzyme catalyses tRNA(Gly) + glycine + ATP = glycyl-tRNA(Gly) + AMP + diphosphate. Its function is as follows. Catalyzes the attachment of glycine to tRNA(Gly). This chain is Glycine--tRNA ligase, found in Staphylococcus epidermidis (strain ATCC 35984 / DSM 28319 / BCRC 17069 / CCUG 31568 / BM 3577 / RP62A).